A 343-amino-acid polypeptide reads, in one-letter code: RNA-binding protein 43 (343 aa).

Residues 15–90 (RTVVVSGLPV…PRLTVSHFSE (76 aa)) form the RRM domain.

The polypeptide is RNA-binding protein 43 (Rbm43) (Mus musculus (Mouse)).